Reading from the N-terminus, the 314-residue chain is Lysophospholipase D GDPD1 (314 aa).

Topologically, residues 1–3 (MSS) are extracellular. The chain crosses the membrane as a helical span at residues 4–24 (TAAFYLLSTLGGYLVTSFLLL). Over 25-195 (KYPTLLHQRK…VEKCYKENSD (171 aa)) the chain is Cytoplasmic. Residues 40 to 309 (SKHISHRGGA…DYPTKLRDFL (270 aa)) form the GP-PDE domain. 3 residues coordinate a divalent metal cation: E72, D74, and H87. A helical membrane pass occupies residues 196–216 (IPILFSLQRVLLILGLFFTGL). Residues 217–314 (LPFVPIREQF…LRDFLHNFSA (98 aa)) lie on the Extracellular side of the membrane.

Belongs to the glycerophosphoryl diester phosphodiesterase family. As to expression, widely expressed with high expression level in testis.

Its subcellular location is the cytoplasm. It localises to the membrane. The protein resides in the perinuclear region. It is found in the endoplasmic reticulum. It carries out the reaction a 1-O-alkyl-sn-glycero-3-phosphocholine + H2O = a 1-O-alkyl-sn-glycero-3-phosphate + choline + H(+). The enzyme catalyses 1-hexadecanoyl-sn-glycero-3-phosphocholine + H2O = 1-hexadecanoyl-sn-glycero-3-phosphate + choline + H(+). The catalysed reaction is N-hexadecanoyl-sn-glycero-3-phosphoethanolamine + H2O = N-hexadecanoylethanolamine + sn-glycerol 3-phosphate + H(+). It catalyses the reaction N-(5Z,8Z,11Z,14Z-eicosatetraenoyl)-1-(9Z-octadecenoyl)-sn-glycero-3-phosphoethanolamine + H2O = N-(5Z,8Z,11Z,14Z-eicosatetraenoyl)-ethanolamine + 1-(9Z-octadecenoyl)-sn-glycero-3-phosphate + H(+). It carries out the reaction N,1-di-(9Z-octadecenoyl)-sn-glycero-3-phosphoethanolamine + H2O = N-(9Z-octadecenoyl) ethanolamine + 1-(9Z-octadecenoyl)-sn-glycero-3-phosphate + H(+). The enzyme catalyses N-hexadecanoyl-1-(9Z-octadecenoyl)-sn-glycero-3-phosphoethanolamine + H2O = N-hexadecanoylethanolamine + 1-(9Z-octadecenoyl)-sn-glycero-3-phosphate + H(+). The catalysed reaction is 1-O-(1Z-octadecenyl)-sn-glycero-3-phospho-N-hexadecanoyl-ethanolamine + H2O = 1-O-(1Z-octadecenyl)-sn-glycero-3-phosphate + N-hexadecanoylethanolamine + H(+). It catalyses the reaction 1-hexadecanoyl-sn-glycero-3-phosphoethanolamine + H2O = 1-hexadecanoyl-sn-glycero-3-phosphate + ethanolamine + H(+). It carries out the reaction 1-O-hexadecyl-sn-glycero-3-phosphocholine + H2O = 1-O-hexadecyl-sn-glycero-3-phosphate + choline + H(+). The enzyme catalyses 1-(9Z-octadecenoyl)-sn-glycero-3-phosphocholine + H2O = 1-(9Z-octadecenoyl)-sn-glycero-3-phosphate + choline + H(+). The catalysed reaction is N,1-dihexadecanoyl-sn-glycero-3-phosphoethanolamine + H2O = N-hexadecanoylethanolamine + 1-hexadecanoyl-sn-glycero-3-phosphate + H(+). It catalyses the reaction 1-O-(1Z-octadecenyl)-sn-glycero-3-phospho-(N-5Z,8Z,11Z,14Z-eicosatetraenoyl)-ethanolamine + H2O = 1-O-(1Z-octadecenyl)-sn-glycero-3-phosphate + N-(5Z,8Z,11Z,14Z-eicosatetraenoyl)-ethanolamine + H(+). It carries out the reaction 1-O-(1Z-octadecenyl)-sn-glycero-3-phospho-(N-9Z-octadecenoyl)-ethanolamine + H2O = 1-O-(1Z-octadecenyl)-sn-glycero-3-phosphate + N-(9Z-octadecenoyl) ethanolamine + H(+). Lysophospholipase D activity is increased by magnesium and manganese and inhibited by calcium in a concentration dependent manner. Loss of lysophospholipase D activity by addition of EDTA. Functionally, hydrolyzes lysoglycerophospholipids to produce lysophosphatidic acid (LPA) and the corresponding amines. Shows a preference for 1-O-alkyl-sn-glycero-3-phosphocholine (lyso-PAF), lysophosphatidylethanolamine (lyso-PE) and lysophosphatidylcholine (lyso-PC). May be involved in bioactive N-acylethanolamine biosynthesis from both N-acyl-lysoplasmenylethanolamin (N-acyl-lysoPlsEt) and N-acyl-lysophosphatidylethanolamin (N-acyl-lysoPE). In addition, hydrolyzes glycerophospho-N-acylethanolamine to N-acylethanolamine. Does not display glycerophosphodiester phosphodiesterase activity, since it cannot hydrolyze either glycerophosphoinositol or glycerophosphocholine. In Homo sapiens (Human), this protein is Lysophospholipase D GDPD1.